The sequence spans 322 residues: uncharacterized protein (322 aa).

Over residues 1-13 the composition is skewed to polar residues; sequence MTNADEQNMGQQE. Disordered stretches follow at residues 1–94 and 125–322; these read MTNA…EEYE and RREM…TDEE. Residues 14-31 show a composition bias toward low complexity; it reads GTDTATTAQDTNTQTVGT. The segment covering 32–50 has biased composition (polar residues); it reads QSENTQNTQQASDAQTEQT. Residues 64 to 75 are compositionally biased toward acidic residues; sequence EVDEDDVLDAQE. Basic and acidic residues-rich tracts occupy residues 141–227, 235–269, 277–295, and 308–322; these read GGDR…RGGD, RPRE…RGGD, RPRE…RTDD, and ARAD…TDEE.

This is an uncharacterized protein from Deinococcus radiodurans (strain ATCC 13939 / DSM 20539 / JCM 16871 / CCUG 27074 / LMG 4051 / NBRC 15346 / NCIMB 9279 / VKM B-1422 / R1).